The primary structure comprises 270 residues: Acyl-[acyl-carrier-protein]--UDP-N-acetylglucosamine O-acyltransferase (270 aa).

This sequence belongs to the transferase hexapeptide repeat family. LpxA subfamily. In terms of assembly, homotrimer.

It is found in the cytoplasm. It carries out the reaction a (3R)-hydroxyacyl-[ACP] + UDP-N-acetyl-alpha-D-glucosamine = a UDP-3-O-[(3R)-3-hydroxyacyl]-N-acetyl-alpha-D-glucosamine + holo-[ACP]. The protein operates within glycolipid biosynthesis; lipid IV(A) biosynthesis; lipid IV(A) from (3R)-3-hydroxytetradecanoyl-[acyl-carrier-protein] and UDP-N-acetyl-alpha-D-glucosamine: step 1/6. Its function is as follows. Involved in the biosynthesis of lipid A, a phosphorylated glycolipid that anchors the lipopolysaccharide to the outer membrane of the cell. In Helicobacter pylori (strain Shi470), this protein is Acyl-[acyl-carrier-protein]--UDP-N-acetylglucosamine O-acyltransferase.